A 202-amino-acid chain; its full sequence is LexA repressor (202 aa).

The H-T-H motif DNA-binding region spans 28 to 48; sequence RAEIASRLGFRSPNAAEEHLK. Active-site for autocatalytic cleavage activity residues include Ser119 and Lys156.

The protein belongs to the peptidase S24 family. Homodimer.

It catalyses the reaction Hydrolysis of Ala-|-Gly bond in repressor LexA.. In terms of biological role, represses a number of genes involved in the response to DNA damage (SOS response), including recA and lexA. Binds to the 16 bp palindromic sequence 5'-CTGTATATATATACAG-3'. In the presence of single-stranded DNA, RecA interacts with LexA causing an autocatalytic cleavage which disrupts the DNA-binding part of LexA, leading to derepression of the SOS regulon and eventually DNA repair. This chain is LexA repressor, found in Sodalis glossinidius (strain morsitans).